Consider the following 165-residue polypeptide: NADPH-dependent 7-cyano-7-deazaguanine reductase (165 aa).

The Thioimide intermediate role is filled by Cys-56. Asp-63 (proton donor) is an active-site residue. Residues 78–80 (VES) and 97–98 (HE) each bind substrate.

This sequence belongs to the GTP cyclohydrolase I family. QueF type 1 subfamily.

It is found in the cytoplasm. The enzyme catalyses 7-aminomethyl-7-carbaguanine + 2 NADP(+) = 7-cyano-7-deazaguanine + 2 NADPH + 3 H(+). The protein operates within tRNA modification; tRNA-queuosine biosynthesis. Its function is as follows. Catalyzes the NADPH-dependent reduction of 7-cyano-7-deazaguanine (preQ0) to 7-aminomethyl-7-deazaguanine (preQ1). This Geobacillus thermodenitrificans (strain NG80-2) protein is NADPH-dependent 7-cyano-7-deazaguanine reductase.